Consider the following 587-residue polypeptide: Glucosylglycerate phosphorylase (587 aa).

Catalysis depends on Asp236, which acts as the Nucleophile.

Belongs to the glycosyl hydrolase 13 family. Glucosylglycerate phosphorylase subfamily.

The enzyme catalyses (2R)-2-O-(alpha-D-glucopyranosyl)-glycerate + phosphate = (R)-glycerate + alpha-D-glucose 1-phosphate. In terms of biological role, catalyzes the reversible phosphorolysis of glucosylglycerate into alpha-D-glucose 1-phosphate (Glc1P) and D-glycerate. May be a regulator of intracellular levels of glucosylglycerate, a compatible solute that primarily protects organisms facing salt stress and very specific nutritional constraints. Cannot catalyze the phosphorolysis of sucrose. This chain is Glucosylglycerate phosphorylase, found in Spirochaeta thermophila (strain ATCC 700085 / DSM 6578 / Z-1203).